An 832-amino-acid chain; its full sequence is Spindle pole body component alp6 (832 aa).

Positions 1–186 (MSEIHVKTAL…STETSSVQHT (186 aa)) are interaction with mzt1. The residue at position 286 (Thr-286) is a Phosphothreonine.

The protein belongs to the TUBGCP family. As to quaternary structure, part of the gamma-tubulin complex. Interacts directly with mzt1. Interacts with mto1. Interacts with mto2.

The protein resides in the cytoplasm. It is found in the cytoskeleton. It localises to the microtubule organizing center. Its subcellular location is the spindle pole body. Component of the gamma tubule complex that is required for the regulation of both interphase microtubules and mitotic bipolar spindles. This Schizosaccharomyces pombe (strain 972 / ATCC 24843) (Fission yeast) protein is Spindle pole body component alp6 (alp6).